A 352-amino-acid chain; its full sequence is Proton-activated chloride channel (352 aa).

Residues 1-55 (MEAIRKELSRSYQELNEEAEPVAIDPEEAEDEEKEQEEAASAVAPDRDSDRSSPP) form a disordered region. Over 1-65 (MEAIRKELSR…VRFSRTCLKN (65 aa)) the chain is Cytoplasmic. Positions 15–38 (LNEEAEPVAIDPEEAEDEEKEQEE) are enriched in acidic residues. A helical membrane pass occupies residues 66–86 (FFSVLLILVYLLLMGVAVFLV). The Extracellular portion of the chain corresponds to 87-299 (YQTITDFRDK…KDPYIQEIQD (213 aa)). A helical transmembrane segment spans residues 300 to 320 (IITANPWSMIALLCSVFLVLF). Topologically, residues 321 to 352 (KAADFAKLSVKWMIKVRRRHLKKRARELNHIS) are cytoplasmic.

The protein belongs to the proton-activated chloride channel family.

The protein resides in the cell membrane. It carries out the reaction chloride(in) = chloride(out). Chloride channel gated by pH that facilitates the entry of chloride ions into cells upon exposure to extracellular acidic pH. In Xenopus tropicalis (Western clawed frog), this protein is Proton-activated chloride channel.